Here is a 197-residue protein sequence, read N- to C-terminus: Fucoxanthin-chlorophyll a-c binding protein F, chloroplastic (197 aa).

Residues 1-31 (MKFAVFASLLASAAAFAPAQQSARTSVATNM) constitute a chloroplast transit peptide. 3 consecutive transmembrane segments (helical) span residues 73–94 (ISML…PGDI), 114–134 (ISTA…IAVM), and 174–196 (GRAA…SLIP).

The protein belongs to the fucoxanthin chlorophyll protein family. As to quaternary structure, the LHC complex of chromophytic algae is composed of fucoxanthin, chlorophyll A and C bound non-covalently by fucoxanthin chlorophyll proteins (FCPs). The ratio of the pigments in lhc; fucoxanthin: chlorophyll C: chlorophyll A is (0.6-1): (0.1-0.3): (1).

It localises to the plastid. It is found in the chloroplast thylakoid membrane. Its function is as follows. The light-harvesting complex (LHC) functions as a light receptor, it captures and delivers excitation energy to photosystems with which it is closely associated. In chromophytic algae, LHC is associated with photosystem II, energy being transferred from fucoxanthin and chlorophyll C to chlorophyll A and the photosynthetic reaction centers where it is used to synthesize ATP and reducing power. This Phaeodactylum tricornutum (Diatom) protein is Fucoxanthin-chlorophyll a-c binding protein F, chloroplastic (FCPF).